The chain runs to 493 residues: Argininosuccinate lyase (493 aa).

It belongs to the lyase 1 family. Argininosuccinate lyase subfamily.

It localises to the cytoplasm. The catalysed reaction is 2-(N(omega)-L-arginino)succinate = fumarate + L-arginine. Its pathway is amino-acid biosynthesis; L-arginine biosynthesis; L-arginine from L-ornithine and carbamoyl phosphate: step 3/3. This is Argininosuccinate lyase from Clavibacter sepedonicus (Clavibacter michiganensis subsp. sepedonicus).